We begin with the raw amino-acid sequence, 306 residues long: Bifunctional protein FolD 2 (306 aa).

Residues 169–171 and isoleucine 235 each bind NADP(+); that span reads GHS.

This sequence belongs to the tetrahydrofolate dehydrogenase/cyclohydrolase family. Homodimer.

The enzyme catalyses (6R)-5,10-methylene-5,6,7,8-tetrahydrofolate + NADP(+) = (6R)-5,10-methenyltetrahydrofolate + NADPH. It catalyses the reaction (6R)-5,10-methenyltetrahydrofolate + H2O = (6R)-10-formyltetrahydrofolate + H(+). It participates in one-carbon metabolism; tetrahydrofolate interconversion. Its function is as follows. Catalyzes the oxidation of 5,10-methylenetetrahydrofolate to 5,10-methenyltetrahydrofolate and then the hydrolysis of 5,10-methenyltetrahydrofolate to 10-formyltetrahydrofolate. In Mesorhizobium japonicum (strain LMG 29417 / CECT 9101 / MAFF 303099) (Mesorhizobium loti (strain MAFF 303099)), this protein is Bifunctional protein FolD 2.